We begin with the raw amino-acid sequence, 424 residues long: MTNKKAFKEACKFIAGGVNSPVRAFANVQSEPKFISHGKGAYIFDIDGNSYIDYVQSWGPLLFGHCDKDIQKACQKALHKGSSFGAPTLLETELAKLVLSDFPHLEKIRFVSSGTEATMSAIRLARGFTKKDKILKFEGCYHGHSDSLLVSAGSGAATFNSPSSLGVLEDVAKHTLVAKYNDINSVKELFEKNKDIACVIIEPIAGNMGLVPAKQDFLEELAKICKNNQTLLIFDEVMSGYRASYLGSYGINHIQADIITFGKVIGGGLPAAAFASRAEIMDILSPLGGVYQAGTLSGNPLAMAAGIASLTKAKKKTKLYDKLGTLAKKLTQGMKKLADEKGLPLQACHVGSMFGYFFTKDPVSNYQDALKSNLALFSKFHKNMLENGIYLAPSQFETGFICSKMDDKVIDITLEAVRESFKRI.

Lys-263 carries the N6-(pyridoxal phosphate)lysine modification.

It belongs to the class-III pyridoxal-phosphate-dependent aminotransferase family. HemL subfamily. In terms of assembly, homodimer. Pyridoxal 5'-phosphate serves as cofactor.

It is found in the cytoplasm. The enzyme catalyses (S)-4-amino-5-oxopentanoate = 5-aminolevulinate. It functions in the pathway porphyrin-containing compound metabolism; protoporphyrin-IX biosynthesis; 5-aminolevulinate from L-glutamyl-tRNA(Glu): step 2/2. The chain is Glutamate-1-semialdehyde 2,1-aminomutase from Campylobacter jejuni subsp. doylei (strain ATCC BAA-1458 / RM4099 / 269.97).